A 382-amino-acid chain; its full sequence is Galactokinase (382 aa).

Residue 34 to 37 coordinates substrate; that stretch reads EHTD. ATP is bound at residue 124 to 130; the sequence is GAGLSSS. 2 residues coordinate Mg(2+): Ser130 and Glu162. The active-site Proton acceptor is the Asp174. Residue Tyr223 coordinates substrate.

The protein belongs to the GHMP kinase family. GalK subfamily.

The protein resides in the cytoplasm. It carries out the reaction alpha-D-galactose + ATP = alpha-D-galactose 1-phosphate + ADP + H(+). The protein operates within carbohydrate metabolism; galactose metabolism. Catalyzes the transfer of the gamma-phosphate of ATP to D-galactose to form alpha-D-galactose-1-phosphate (Gal-1-P). In Salmonella paratyphi A (strain ATCC 9150 / SARB42), this protein is Galactokinase.